Reading from the N-terminus, the 319-residue chain is Free fatty acid receptor 3 (319 aa).

The Extracellular portion of the chain corresponds to 1–15 (MDTSFFPGNHWLFFS). The chain crosses the membrane as a helical span at residues 16-36 (VDLLVFLVGLPLNVMALVVFV). Residues 37 to 43 (NKLRRRP) are Cytoplasmic-facing. The helical transmembrane segment at 44 to 64 (VAVDLLLLNLTISDLLLLLFL) threads the bilayer. The Extracellular segment spans residues 65–98 (PFRIVEAACGMKWILPFIFCPLSGFLFFTTIYLT). An intrachain disulfide couples cysteine 84 to cysteine 165. Residues 99–119 (SLFLMTVSIERFLSVAYPLWY) form a helical membrane-spanning segment. At 120–127 (KTRPRLAQ) the chain is on the cytoplasmic side. A helical membrane pass occupies residues 128–148 (AGLVSGICWFLASAHCSVIYV). Over 149 to 183 (TEYWGNATYSQGTNGTCYLEFREDQLAILLPVRLE) the chain is Extracellular. The chain crosses the membrane as a helical span at residues 184–206 (MAVVLFMVPLCITSYCYSRLVWI). The Cytoplasmic portion of the chain corresponds to 207–218 (LSQGASRRRRKR). A helical membrane pass occupies residues 219 to 239 (VMGLLVATLLIFFVCFGPYNM). At 240–254 (SHVVGYVRGESPTWR) the chain is on the extracellular side. The helical transmembrane segment at 255–275 (SYVLLLSTLNSCIDPLVFYFS) threads the bilayer. Over 276–319 (SSKFQADFHQLLSRLIRACVPWTQEVSLELKVKNGEEPSKECPS) the chain is Cytoplasmic.

The protein belongs to the G-protein coupled receptor 1 family. Expressed in the sympathetic nervous system.

It localises to the cell membrane. G protein-coupled receptor that is activated by a major product of dietary fiber digestion, the short chain fatty acids (SCFAs), and that plays a role in the regulation of whole-body energy homeostasis and in intestinal immunity. In omnivorous mammals, the short chain fatty acids acetate, propionate and butyrate are produced primarily by the gut microbiome that metabolizes dietary fibers. SCFAs serve as a source of energy but also act as signaling molecules. That G protein-coupled receptor is probably coupled to the pertussis toxin-sensitive, G(i/o)-alpha family of G proteins. Its activation results in the formation of inositol 1,4,5-trisphosphate, the mobilization of intracellular calcium, the phosphorylation of the MAPK3/ERK1 and MAPK1/ERK2 kinases and the inhibition of intracellular cAMP accumulation. Activated by SCFAs and by beta-hydroxybutyrate, a ketone body produced by the liver upon starvation, it inhibits N-type calcium channels and modulates the activity of sympathetic neurons through a signaling cascade involving the beta and gamma subunits of its coupled G protein, phospholipase C and MAP kinases. Thereby, it may regulate energy expenditure through the control of the sympathetic nervous system that controls for instance heart rate. Upon activation by SCFAs accumulating in the intestine, it may also signal to the brain via neural circuits which in turn would regulate intestinal gluconeogenesis. May also control the production of hormones involved in whole-body energy homeostasis. May for instance, regulate blood pressure through renin secretion. May also regulate secretion of the PYY peptide by enteroendocrine cells and control gut motility, intestinal transit rate, and the harvesting of energy from SCFAs produced by gut microbiota. May also indirectly regulate the production of LEP/Leptin, a hormone acting on the CNS to inhibit food intake, in response to the presence of short-chain fatty acids in the intestine. Finally, may also play a role in glucose homeostasis. Besides its role in energy homeostasis, may play a role in intestinal immunity. May mediate the activation of the inflammatory and immune response by SCFAs in the gut, regulating the rapid production of chemokines and cytokines by intestinal epithelial cells. The chain is Free fatty acid receptor 3 (Ffar3) from Rattus norvegicus (Rat).